The primary structure comprises 209 residues: Glutathione S-transferase 1, isoform D (209 aa).

A GST N-terminal domain is found at 1–80 (MDFYYLPGSA…YLAEKYGKDD (80 aa)). Glutathione contacts are provided by residues S9, 50 to 52 (HCI), and 64 to 66 (ESR). Residues 86–207 (DPQKRAVVNQ…AGADEFKAKF (122 aa)) form the GST C-terminal domain.

The protein belongs to the GST superfamily. Theta family. As to quaternary structure, homodimer.

The enzyme catalyses RX + glutathione = an S-substituted glutathione + a halide anion + H(+). It carries out the reaction 1,1,1-trichloro-2,2-bis(4-chlorophenyl)ethane = 1,1-dichloro-2,2-bis(4-chlorophenyl)ethylene + chloride + H(+). Its activity is regulated as follows. Inhibited by S-hexylglutathione. Its function is as follows. Conjugation of reduced glutathione to a wide number of exogenous and endogenous hydrophobic electrophiles. Has DDT dehydrochlorinase activity. The sequence is that of Glutathione S-transferase 1, isoform D (GstD1) from Anopheles gambiae (African malaria mosquito).